The sequence spans 485 residues: Glutamate--tRNA ligase (485 aa).

The 'HIGH' region signature appears at 11 to 21 (PSPTGYMHVGN). Zn(2+) is bound by residues cysteine 108, cysteine 110, cysteine 135, and aspartate 137. The 'KMSKS' region signature appears at 252–256 (KLSKR). ATP is bound at residue lysine 255.

This sequence belongs to the class-I aminoacyl-tRNA synthetase family. Glutamate--tRNA ligase type 1 subfamily. As to quaternary structure, monomer. It depends on Zn(2+) as a cofactor.

Its subcellular location is the cytoplasm. It carries out the reaction tRNA(Glu) + L-glutamate + ATP = L-glutamyl-tRNA(Glu) + AMP + diphosphate. Catalyzes the attachment of glutamate to tRNA(Glu) in a two-step reaction: glutamate is first activated by ATP to form Glu-AMP and then transferred to the acceptor end of tRNA(Glu). In Clostridium botulinum (strain Okra / Type B1), this protein is Glutamate--tRNA ligase.